The primary structure comprises 673 residues: Probable urea active transporter 2 (673 aa).

14 helical membrane passes run glycine 8–isoleucine 28, isoleucine 83–leucine 103, valine 132–glycine 152, threonine 164–leucine 184, valine 196–serine 218, methionine 249–glycine 269, leucine 287–alanine 307, isoleucine 336–phenylalanine 356, glutamine 391–serine 411, leucine 424–asparagine 446, phenylalanine 451–serine 471, phenylalanine 492–isoleucine 512, isoleucine 559–glycine 579, and leucine 592–leucine 612.

Belongs to the sodium:solute symporter (SSF) (TC 2.A.21) family.

The protein resides in the endoplasmic reticulum membrane. Involved in active transport of urea. The chain is Probable urea active transporter 2 (dur3-2) from Schizosaccharomyces pombe (strain 972 / ATCC 24843) (Fission yeast).